The sequence spans 73 residues: Beta-defensin 10 (73 aa).

The first 23 residues, 1 to 23 (MRTLCSLLLICCLLFSYTTPAVG), serve as a signal peptide directing secretion. 3 disulfides stabilise this stretch: cysteine 37/cysteine 66, cysteine 44/cysteine 59, and cysteine 49/cysteine 67.

This sequence belongs to the beta-defensin family. As to expression, expressed in both adult and neonate brain, and very weakly in kidneys, epididymis, and testis.

Its subcellular location is the secreted. In terms of biological role, has antibacterial activity. This is Beta-defensin 10 (Defb10) from Mus musculus (Mouse).